Consider the following 346-residue polypeptide: 4-hydroxy-3-methylbut-2-enyl diphosphate reductase (346 aa).

Residue Cys19 coordinates [4Fe-4S] cluster. The (2E)-4-hydroxy-3-methylbut-2-enyl diphosphate site is built by His48 and His84. The dimethylallyl diphosphate site is built by His48 and His84. Residues His48 and His84 each contribute to the isopentenyl diphosphate site. Cys106 serves as a coordination point for [4Fe-4S] cluster. (2E)-4-hydroxy-3-methylbut-2-enyl diphosphate is bound at residue His134. His134 is a binding site for dimethylallyl diphosphate. Residue His134 participates in isopentenyl diphosphate binding. The active-site Proton donor is the Glu136. Thr175 contributes to the (2E)-4-hydroxy-3-methylbut-2-enyl diphosphate binding site. Residue Cys205 participates in [4Fe-4S] cluster binding. (2E)-4-hydroxy-3-methylbut-2-enyl diphosphate-binding residues include Ser233, Ser234, Asn235, and Ser278. Positions 233, 234, 235, and 278 each coordinate dimethylallyl diphosphate. Isopentenyl diphosphate is bound by residues Ser233, Ser234, Asn235, and Ser278.

It belongs to the IspH family. The cofactor is [4Fe-4S] cluster.

The enzyme catalyses isopentenyl diphosphate + 2 oxidized [2Fe-2S]-[ferredoxin] + H2O = (2E)-4-hydroxy-3-methylbut-2-enyl diphosphate + 2 reduced [2Fe-2S]-[ferredoxin] + 2 H(+). It carries out the reaction dimethylallyl diphosphate + 2 oxidized [2Fe-2S]-[ferredoxin] + H2O = (2E)-4-hydroxy-3-methylbut-2-enyl diphosphate + 2 reduced [2Fe-2S]-[ferredoxin] + 2 H(+). Its pathway is isoprenoid biosynthesis; dimethylallyl diphosphate biosynthesis; dimethylallyl diphosphate from (2E)-4-hydroxy-3-methylbutenyl diphosphate: step 1/1. It functions in the pathway isoprenoid biosynthesis; isopentenyl diphosphate biosynthesis via DXP pathway; isopentenyl diphosphate from 1-deoxy-D-xylulose 5-phosphate: step 6/6. Functionally, catalyzes the conversion of 1-hydroxy-2-methyl-2-(E)-butenyl 4-diphosphate (HMBPP) into a mixture of isopentenyl diphosphate (IPP) and dimethylallyl diphosphate (DMAPP). Acts in the terminal step of the DOXP/MEP pathway for isoprenoid precursor biosynthesis. The protein is 4-hydroxy-3-methylbut-2-enyl diphosphate reductase of Brucella abortus (strain S19).